A 301-amino-acid chain; its full sequence is Probable alpha-L-glutamate ligase (301 aa).

In terms of domain architecture, ATP-grasp spans L104–E287. Residues K141, E178 to Y179, D187, and R211 to N213 contribute to the ATP site. 3 residues coordinate Mg(2+): D248, E260, and N262. 3 residues coordinate Mn(2+): D248, E260, and N262.

Belongs to the RimK family. The cofactor is Mg(2+). Mn(2+) serves as cofactor.

The chain is Probable alpha-L-glutamate ligase from Pseudoalteromonas translucida (strain TAC 125).